The following is a 676-amino-acid chain: RNA helicase NPH-II (676 aa).

Residues 172–347 (FSAWISHRPV…VFLPNPAFIH (176 aa)) form the Helicase ATP-binding domain. ATP is bound at residue 185–192 (GGTGVGKT). Residues 296-299 (DEVH) carry the DEXH box motif. The Helicase C-terminal domain occupies 366-535 (NPSSRMAYIE…NYILYANKFN (170 aa)).

Belongs to the DEAD box helicase family. DEAH subfamily. As to quaternary structure, monomer.

The protein localises to the virion. The catalysed reaction is ATP + H2O = ADP + phosphate + H(+). In terms of biological role, NTP-dependent helicase that catalyzes unidirectional unwinding of 3'tailed duplex RNAs and plays an important role during transcription of early mRNAs, presumably by preventing R-loop formation behind the elongating RNA polymerase. Might also play a role in the export of newly synthesized mRNA chains out of the core into the cytoplasm. Required for replication and propagation of viral particles. This Vaccinia virus (strain Copenhagen) (VACV) protein is RNA helicase NPH-II (OPG084).